We begin with the raw amino-acid sequence, 385 residues long: Acetylornithine deacetylase (385 aa).

Histidine 80 is a Zn(2+) binding site. Aspartate 82 is a catalytic residue. Aspartate 112 is a binding site for Zn(2+). Glutamate 144 acts as the Proton acceptor in catalysis. Zn(2+) contacts are provided by glutamate 145, glutamate 169, and histidine 355.

The protein belongs to the peptidase M20A family. ArgE subfamily. As to quaternary structure, homodimer. It depends on Zn(2+) as a cofactor. Co(2+) serves as cofactor. Requires glutathione as cofactor.

Its subcellular location is the cytoplasm. The catalysed reaction is N(2)-acetyl-L-ornithine + H2O = L-ornithine + acetate. The protein operates within amino-acid biosynthesis; L-arginine biosynthesis; L-ornithine from N(2)-acetyl-L-ornithine (linear): step 1/1. In terms of biological role, catalyzes the hydrolysis of the amide bond of N(2)-acetylated L-amino acids. Cleaves the acetyl group from N-acetyl-L-ornithine to form L-ornithine, an intermediate in L-arginine biosynthesis pathway, and a branchpoint in the synthesis of polyamines. The sequence is that of Acetylornithine deacetylase from Photorhabdus laumondii subsp. laumondii (strain DSM 15139 / CIP 105565 / TT01) (Photorhabdus luminescens subsp. laumondii).